Consider the following 510-residue polypeptide: MAFQVLFICLISTIVFASILWRKQNKNKTLLPPSPMPLPIIGHLHLLSPTPHQDFHKLSLRYGPIIHLFLGSVPCVVASTAEAAKEFLKTHEPAFSNRPANTVAVETLTYGFQDFLFAPYGPYWKFMKKLCMSELLGGHMLDQFLPVRQXETKKFIKRVLQKGISGEAVDFGGEFITLSNNIVSRMIVSQTSTTEDENEVEEMRKLVKDAAELSGKFNISDFVSFLKRFDLQGFNKRLEKIRDCFDTVLDRIIKQREEERRNKNETVGKREFKDMLDVLFDISEDESSEIKLNKENIKAFILDILIAGTDTSAVTMEWAMAELINNPGVLEKARQEMDAVVGKSRIVEESDIANLPYLQGIVRETLRLHPAGPLLFRESSRRAVVCGYDIPAKTRLFVNVWAIGRDPNHWENPLEFRPERFVENGKSQLDVRGQHYHLLPFGSGRRACPGTSLALQVVHVNLAVLIQCFQWKVDCDNGKVNMEEKAGITLPRAHPIICVPIRRLNPFPVV.

The chain crosses the membrane as a helical span at residues 64–84; the sequence is PIIHLFLGSVPCVVASTAEAA. A heme-binding site is contributed by C448.

Belongs to the cytochrome P450 family. Heme serves as cofactor.

Its subcellular location is the membrane. In Glycine max (Soybean), this protein is Cytochrome P450 93A3 (CYP93A3).